The chain runs to 622 residues: Pentatricopeptide repeat-containing protein At5g06540 (622 aa).

PPR repeat units lie at residues 81 to 115, 116 to 150, 151 to 181, 182 to 212, 213 to 247, 248 to 282, 283 to 313, 314 to 348, 349 to 384, and 385 to 419; these read NLFV…RIWP, DNIT…GFQN, DVYV…MGFR, DVVS…MPHR, NLFT…GVVA, NETV…HMTV, NLIL…LPET, DSLS…GFIP, RDVT…GIEP, and RLEH…PNAP. A type E motif region spans residues 420–495; it reads ILGALLGACK…PPGWSLIEID (76 aa). The interval 496–527 is type E(+) motif; it reads GKINKFTMGDDQKHPEMGKIRRKWEEILGKIR. The interval 528-622 is type DYW motif; sequence LIGYKGNTGD…NGVCSCRDYW (95 aa).

The protein belongs to the PPR family. PCMP-H subfamily.

The protein is Pentatricopeptide repeat-containing protein At5g06540 (PCMP-H88) of Arabidopsis thaliana (Mouse-ear cress).